A 269-amino-acid polypeptide reads, in one-letter code: WW domain-binding protein 1 (269 aa).

Short sequence motifs (PPxY motif) lie at residues 124–127 and 137–141; these read PPAY and PPPPY. Disordered stretches follow at residues 169–203 and 249–269; these read EGTNVEGVSSHQSAPPHQEGEPGAGVTPASTPPSC and PPESVPQIFPMGLSSSEGDIP. The segment covering 174–183 has biased composition (polar residues); the sequence is EGVSSHQSAP.

As to quaternary structure, interacts with NEDD4. Binds to the WW domain of YAP1, WWP1 and WWP2. Interacts with WWOX. Expressed in most tissues but at significantly lower levels in placenta, lung, liver, and kidney.

This Homo sapiens (Human) protein is WW domain-binding protein 1 (WBP1).